The primary structure comprises 324 residues: Probable non-intrinsic ABC protein 5 (324 aa).

An ABC transporter domain is found at 2–111 (DRERYDKVIE…ADLTLVMKDG (110 aa)). 2 consecutive transmembrane segments (helical) span residues 212–232 (YITL…QILF) and 259–279 (LSTL…CILV). Residues 222-324 (VPFILLGQIL…TCSKTCIYSS (103 aa)) enclose the ABC transmembrane type-1 domain.

Belongs to the ABC transporter superfamily.

The protein resides in the membrane. The protein is Probable non-intrinsic ABC protein 5 (NAP5) of Arabidopsis thaliana (Mouse-ear cress).